The following is a 295-amino-acid chain: Methionine aminopeptidase (295 aa).

Histidine 63 contacts substrate. A divalent metal cation is bound by residues aspartate 83, aspartate 94, and histidine 154. Substrate is bound at residue histidine 162. A divalent metal cation-binding residues include glutamate 188 and glutamate 281.

It belongs to the peptidase M24A family. Methionine aminopeptidase archaeal type 2 subfamily. Monomer. It depends on Fe(2+) as a cofactor. Requires Co(2+) as cofactor. The cofactor is Ni(2+). Mn(2+) is required as a cofactor.

It catalyses the reaction Release of N-terminal amino acids, preferentially methionine, from peptides and arylamides.. Functionally, removes the N-terminal methionine from nascent proteins. The N-terminal methionine is often cleaved when the second residue in the primary sequence is small and uncharged (Met-Ala-, Cys, Gly, Pro, Ser, Thr, or Val). This Thermococcus onnurineus (strain NA1) protein is Methionine aminopeptidase.